Consider the following 133-residue polypeptide: Cytidine deaminase (133 aa).

The CMP/dCMP-type deaminase domain occupies 4–126 (VDWNMLRGNA…DLLPDAFGLD (123 aa)). A substrate-binding site is contributed by 45 to 47 (NVE). Residue C56 coordinates Zn(2+). E58 (proton donor) is an active-site residue. Residues C89 and C92 each contribute to the Zn(2+) site.

The protein belongs to the cytidine and deoxycytidylate deaminase family. As to quaternary structure, homotetramer. Zn(2+) is required as a cofactor.

It catalyses the reaction cytidine + H2O + H(+) = uridine + NH4(+). The enzyme catalyses 2'-deoxycytidine + H2O + H(+) = 2'-deoxyuridine + NH4(+). Recycles cytidine and 2-deoxycytidine for uridine and 2-deoxyuridine synthesis, respectively. Catalyzes the hydrolytic deamination of cytidine and 2-deoxycytidine to form, respectively, uridine and 2-deoxyuridine. The protein is Cytidine deaminase (cdd) of Mycobacterium tuberculosis (strain CDC 1551 / Oshkosh).